The sequence spans 121 residues: uncharacterized protein (121 aa).

The region spanning Ile-7–Gly-121 is the HIT domain. Residues His-105–His-109 carry the Histidine triad motif motif.

This is an uncharacterized protein from Aquifex aeolicus (strain VF5).